A 3232-amino-acid chain; its full sequence is D-lysergyl-peptide-synthetase subunit 1 (3232 aa).

The tract at residues 90-474 (GCLTYDEMSI…LGRKDDQVKI (385 aa)) is adenylation (A) domain 1. Residues 617–686 (REKLLQGCFA…TLREIVIVST (70 aa)) enclose the Carrier 1 domain. At serine 649 the chain carries O-(pantetheine 4'-phosphoryl)serine. Positions 731–1122 (EDIYPCTHLQ…EHILTQIHSN (392 aa)) are condensation (C) domain 1. The tract at residues 1165 to 1572 (QAKCQAQPDA…RRKDAQVKIR (408 aa)) is adenylation (A) domain 2. A Carrier 2 domain is found at 1717–1785 (TEHEISAIWA…TIRKLALARG (69 aa)). O-(pantetheine 4'-phosphoryl)serine is present on serine 1749. The segment at 1835–2252 (ERIYPCSPIQ…ALPVLDEDQM (418 aa)) is condensation (C) domain 2. Positions 2276–2675 (QQCLRCPDSP…GRNDDQVKVR (400 aa)) are adenylation (A) domain 3. Residues 2810–2878 (MEAELQRLVG…RVSDLARIVE (69 aa)) form the Carrier 3 domain. Serine 2842 carries the post-translational modification O-(pantetheine 4'-phosphoryl)serine. The tract at residues 2943 to 3218 (LYFSKPVASE…LLHWLHQQHI (276 aa)) is cyclization (Cyc) domain.

This sequence belongs to the NRP synthetase family.

The protein operates within alkaloid biosynthesis; ergot alkaloid biosynthesis. In terms of biological role, D-lysergyl-peptide-synthetase subunit 1; part of the gene cluster that mediates the biosynthesis of fungal ergot alkaloid. DmaW catalyzes the first step of ergot alkaloid biosynthesis by condensing dimethylallyl diphosphate (DMAP) and tryptophan to form 4-dimethylallyl-L-tryptophan. The second step is catalyzed by the methyltransferase easF that methylates 4-dimethylallyl-L-tryptophan in the presence of S-adenosyl-L-methionine, resulting in the formation of 4-dimethylallyl-L-abrine. The catalase easC and the FAD-dependent oxidoreductase easE then transform 4-dimethylallyl-L-abrine to chanoclavine-I which is further oxidized by easD in the presence of NAD(+), resulting in the formation of chanoclavine-I aldehyde. Agroclavine dehydrogenase easG then mediates the conversion of chanoclavine-I aldehyde to agroclavine via a non-enzymatic adduct reaction: the substrate is an iminium intermediate that is formed spontaneously from chanoclavine-I aldehyde in the presence of glutathione. The presence of easA is not required to complete this reaction. Further conversion of agroclavine to paspalic acid is a two-step process involving oxidation of agroclavine to elymoclavine and of elymoclavine to paspalic acid, the second step being performed by the elymoclavine oxidase cloA. Paspalic acid is then further converted to D-lysergic acid. Ergopeptines are assembled from D-lysergic acid and three different amino acids by the D-lysergyl-peptide-synthetases composed each of a monomudular and a trimodular nonribosomal peptide synthetase subunit. LpsB and lpsC encode the monomodular subunits responsible for D-lysergic acid activation and incorporation into the ergopeptine backbone. LpsA1 and A2 subunits encode the trimodular nonribosomal peptide synthetase assembling the tripeptide portion of ergopeptines. LpsA1 is responsible for formation of the major ergopeptine, ergotamine, and lpsA2 for alpha-ergocryptine, the minor ergopeptine of the total alkaloid mixture elaborated by C.purpurea. D-lysergyl-tripeptides are assembled by the nonribosomal peptide synthetases and released as N-(D-lysergyl-aminoacyl)-lactams. Cyclolization of the D-lysergyl-tripeptides is performed by the Fe(2+)/2-ketoglutarate-dependent dioxygenase easH which introduces a hydroxyl group into N-(D-lysergyl-aminoacyl)-lactam at alpha-C of the aminoacyl residue followed by spontaneous condensation with the terminal lactam carbonyl group. This chain is D-lysergyl-peptide-synthetase subunit 1, found in Claviceps purpurea (Ergot fungus).